A 146-amino-acid polypeptide reads, in one-letter code: Large ribosomal subunit protein uL23m (146 aa).

Residues 108-138 are disordered; that stretch reads PDLFPEKDPRSPEPLEEELPQQRQSSDLRCP. Residues 111 to 120 are compositionally biased toward basic and acidic residues; that stretch reads FPEKDPRSPE.

This sequence belongs to the universal ribosomal protein uL23 family. Component of the mitochondrial ribosome large subunit (39S) which comprises a 16S rRNA and about 50 distinct proteins.

It is found in the mitochondrion. This chain is Large ribosomal subunit protein uL23m (Mrpl23), found in Mus musculus (Mouse).